The primary structure comprises 118 residues: NADPH-dependent 7-cyano-7-deazaguanine reductase (118 aa).

The active-site Thioimide intermediate is the Cys-31. Asp-38 (proton donor) is an active-site residue. Residues 53-55 (IEL) and 72-73 (YE) each bind substrate.

The protein belongs to the GTP cyclohydrolase I family. QueF type 1 subfamily.

Its subcellular location is the cytoplasm. It catalyses the reaction 7-aminomethyl-7-carbaguanine + 2 NADP(+) = 7-cyano-7-deazaguanine + 2 NADPH + 3 H(+). Its pathway is tRNA modification; tRNA-queuosine biosynthesis. Its function is as follows. Catalyzes the NADPH-dependent reduction of 7-cyano-7-deazaguanine (preQ0) to 7-aminomethyl-7-deazaguanine (preQ1). This Prosthecochloris aestuarii (strain DSM 271 / SK 413) protein is NADPH-dependent 7-cyano-7-deazaguanine reductase.